Consider the following 280-residue polypeptide: Thymidylate synthase (280 aa).

Arginine 21 serves as a coordination point for dUMP. (6R)-5,10-methylene-5,6,7,8-tetrahydrofolate is bound at residue histidine 51. 142–143 is a dUMP binding site; sequence RR. Cysteine 162 (nucleophile) is an active-site residue. Residues 182–185, asparagine 193, and 223–225 each bind dUMP; these read RSAD and HLY. A (6R)-5,10-methylene-5,6,7,8-tetrahydrofolate-binding site is contributed by aspartate 185. Residue alanine 279 participates in (6R)-5,10-methylene-5,6,7,8-tetrahydrofolate binding.

This sequence belongs to the thymidylate synthase family. Bacterial-type ThyA subfamily. In terms of assembly, homodimer.

It is found in the cytoplasm. It carries out the reaction dUMP + (6R)-5,10-methylene-5,6,7,8-tetrahydrofolate = 7,8-dihydrofolate + dTMP. It functions in the pathway pyrimidine metabolism; dTTP biosynthesis. Catalyzes the reductive methylation of 2'-deoxyuridine-5'-monophosphate (dUMP) to 2'-deoxythymidine-5'-monophosphate (dTMP) while utilizing 5,10-methylenetetrahydrofolate (mTHF) as the methyl donor and reductant in the reaction, yielding dihydrofolate (DHF) as a by-product. This enzymatic reaction provides an intracellular de novo source of dTMP, an essential precursor for DNA biosynthesis. This Acinetobacter baylyi (strain ATCC 33305 / BD413 / ADP1) protein is Thymidylate synthase.